Consider the following 478-residue polypeptide: Chromosomal replication initiator protein DnaA (478 aa).

A domain I, interacts with DnaA modulators region spans residues Met1 to Tyr82. A domain II region spans residues Tyr82–Ser140. The tract at residues Gln141–Ser358 is domain III, AAA+ region. 4 residues coordinate ATP: Gly186, Gly188, Lys189, and Thr190. The interval Ser359–Leu478 is domain IV, binds dsDNA.

The protein belongs to the DnaA family. Oligomerizes as a right-handed, spiral filament on DNA at oriC.

The protein localises to the cytoplasm. Its function is as follows. Plays an essential role in the initiation and regulation of chromosomal replication. ATP-DnaA binds to the origin of replication (oriC) to initiate formation of the DNA replication initiation complex once per cell cycle. Binds the DnaA box (a 9 base pair repeat at the origin) and separates the double-stranded (ds)DNA. Forms a right-handed helical filament on oriC DNA; dsDNA binds to the exterior of the filament while single-stranded (ss)DNA is stabiized in the filament's interior. The ATP-DnaA-oriC complex binds and stabilizes one strand of the AT-rich DNA unwinding element (DUE), permitting loading of DNA polymerase. After initiation quickly degrades to an ADP-DnaA complex that is not apt for DNA replication. Binds acidic phospholipids. The protein is Chromosomal replication initiator protein DnaA of Flavobacterium psychrophilum (strain ATCC 49511 / DSM 21280 / CIP 103535 / JIP02/86).